Here is a 314-residue protein sequence, read N- to C-terminus: tRNA-cytidine(32) 2-sulfurtransferase (314 aa).

The PP-loop motif motif lies at 58-63 (SGGKDS). [4Fe-4S] cluster contacts are provided by C133, C136, and C224.

The protein belongs to the TtcA family. Homodimer. Requires Mg(2+) as cofactor. The cofactor is [4Fe-4S] cluster.

It localises to the cytoplasm. It catalyses the reaction cytidine(32) in tRNA + S-sulfanyl-L-cysteinyl-[cysteine desulfurase] + AH2 + ATP = 2-thiocytidine(32) in tRNA + L-cysteinyl-[cysteine desulfurase] + A + AMP + diphosphate + H(+). Its pathway is tRNA modification. Catalyzes the ATP-dependent 2-thiolation of cytidine in position 32 of tRNA, to form 2-thiocytidine (s(2)C32). The sulfur atoms are provided by the cysteine/cysteine desulfurase (IscS) system. This is tRNA-cytidine(32) 2-sulfurtransferase from Polaromonas naphthalenivorans (strain CJ2).